Consider the following 662-residue polypeptide: Acetyl-coenzyme A synthetase (662 aa).

Residues 197-200 and Thr-317 each bind CoA; that span reads RKGK. Residues 393-395, 417-422, Asp-510, and Arg-525 each bind ATP; these read GEP and DTWWQT. Ser-533 is a binding site for CoA. Residue Arg-536 coordinates ATP. Mg(2+)-binding residues include His-549 and Val-552. Residue Lys-623 is modified to N6-acetyllysine.

Belongs to the ATP-dependent AMP-binding enzyme family. Mg(2+) serves as cofactor. Post-translationally, acetylated. Deacetylation by the SIR2-homolog deacetylase activates the enzyme.

It catalyses the reaction acetate + ATP + CoA = acetyl-CoA + AMP + diphosphate. Functionally, catalyzes the conversion of acetate into acetyl-CoA (AcCoA), an essential intermediate at the junction of anabolic and catabolic pathways. AcsA undergoes a two-step reaction. In the first half reaction, AcsA combines acetate with ATP to form acetyl-adenylate (AcAMP) intermediate. In the second half reaction, it can then transfer the acetyl group from AcAMP to the sulfhydryl group of CoA, forming the product AcCoA. This is Acetyl-coenzyme A synthetase from Helicobacter pylori (strain P12).